Reading from the N-terminus, the 203-residue chain is ATP phosphoribosyltransferase (203 aa).

The protein belongs to the ATP phosphoribosyltransferase family. Short subfamily.

It is found in the cytoplasm. It catalyses the reaction 1-(5-phospho-beta-D-ribosyl)-ATP + diphosphate = 5-phospho-alpha-D-ribose 1-diphosphate + ATP. The protein operates within amino-acid biosynthesis; L-histidine biosynthesis; L-histidine from 5-phospho-alpha-D-ribose 1-diphosphate: step 1/9. Functionally, catalyzes the condensation of ATP and 5-phosphoribose 1-diphosphate to form N'-(5'-phosphoribosyl)-ATP (PR-ATP). Has a crucial role in the pathway because the rate of histidine biosynthesis seems to be controlled primarily by regulation of HisG enzymatic activity. The sequence is that of ATP phosphoribosyltransferase from Thermococcus kodakarensis (strain ATCC BAA-918 / JCM 12380 / KOD1) (Pyrococcus kodakaraensis (strain KOD1)).